The sequence spans 552 residues: CTP synthase (552 aa).

The segment at 1 to 270 is amidoligase domain; it reads MTKYVFVTGG…DRIICEELKL (270 aa). Residue serine 13 coordinates CTP. Serine 13 is a binding site for UTP. ATP is bound by residues 14–19 and aspartate 71; that span reads SLGKGI. Aspartate 71 and glutamate 144 together coordinate Mg(2+). CTP-binding positions include 151-153, 191-196, and lysine 227; these read DIE and KTKPTQ. UTP contacts are provided by residues 191–196 and lysine 227; that span reads KTKPTQ. In terms of domain architecture, Glutamine amidotransferase type-1 spans 295–547; it reads TIGMVGKYVD…VEAAFANKQA (253 aa). Residue glycine 356 coordinates L-glutamine. Cysteine 383 serves as the catalytic Nucleophile; for glutamine hydrolysis. Residues 384-387, glutamate 407, and arginine 473 contribute to the L-glutamine site; that span reads LGMQ. Catalysis depends on residues histidine 520 and glutamate 522.

Belongs to the CTP synthase family. As to quaternary structure, homotetramer.

The catalysed reaction is UTP + L-glutamine + ATP + H2O = CTP + L-glutamate + ADP + phosphate + 2 H(+). It catalyses the reaction L-glutamine + H2O = L-glutamate + NH4(+). It carries out the reaction UTP + NH4(+) + ATP = CTP + ADP + phosphate + 2 H(+). The protein operates within pyrimidine metabolism; CTP biosynthesis via de novo pathway; CTP from UDP: step 2/2. With respect to regulation, allosterically activated by GTP, when glutamine is the substrate; GTP has no effect on the reaction when ammonia is the substrate. The allosteric effector GTP functions by stabilizing the protein conformation that binds the tetrahedral intermediate(s) formed during glutamine hydrolysis. Inhibited by the product CTP, via allosteric rather than competitive inhibition. Catalyzes the ATP-dependent amination of UTP to CTP with either L-glutamine or ammonia as the source of nitrogen. Regulates intracellular CTP levels through interactions with the four ribonucleotide triphosphates. The protein is CTP synthase of Burkholderia ambifaria (strain ATCC BAA-244 / DSM 16087 / CCUG 44356 / LMG 19182 / AMMD) (Burkholderia cepacia (strain AMMD)).